Here is a 538-residue protein sequence, read N- to C-terminus: CTP synthase (538 aa).

Residues 1–267 form an amidoligase domain region; the sequence is MDRAKFIFVT…LTPIARRFNL (267 aa). Residue S15 coordinates CTP. S15 contributes to the UTP binding site. ATP is bound by residues 16 to 21 and D73; that span reads SLGKGI. 2 residues coordinate Mg(2+): D73 and E141. Residues 148–150, 188–193, and K224 each bind CTP; these read DME and KTKPTQ. UTP contacts are provided by residues 188–193 and K224; that span reads KTKPTQ. The 247-residue stretch at 292 to 538 folds into the Glutamine amidotransferase type-1 domain; it reads KIGFVGKYLS…DFIKSALSKS (247 aa). Position 351 (G351) interacts with L-glutamine. C378 (nucleophile; for glutamine hydrolysis) is an active-site residue. Residues 379–382, E402, and R469 each bind L-glutamine; that span reads LGMQ. Active-site residues include H513 and E515.

This sequence belongs to the CTP synthase family. In terms of assembly, homotetramer.

It carries out the reaction UTP + L-glutamine + ATP + H2O = CTP + L-glutamate + ADP + phosphate + 2 H(+). The catalysed reaction is L-glutamine + H2O = L-glutamate + NH4(+). It catalyses the reaction UTP + NH4(+) + ATP = CTP + ADP + phosphate + 2 H(+). It functions in the pathway pyrimidine metabolism; CTP biosynthesis via de novo pathway; CTP from UDP: step 2/2. Allosterically activated by GTP, when glutamine is the substrate; GTP has no effect on the reaction when ammonia is the substrate. The allosteric effector GTP functions by stabilizing the protein conformation that binds the tetrahedral intermediate(s) formed during glutamine hydrolysis. Inhibited by the product CTP, via allosteric rather than competitive inhibition. Its function is as follows. Catalyzes the ATP-dependent amination of UTP to CTP with either L-glutamine or ammonia as the source of nitrogen. Regulates intracellular CTP levels through interactions with the four ribonucleotide triphosphates. The chain is CTP synthase from Helicobacter pylori (strain HPAG1).